We begin with the raw amino-acid sequence, 266 residues long: Type III pantothenate kinase (266 aa).

An ATP-binding site is contributed by 9 to 16 (DAGNSRIK). Substrate-binding positions include Tyr-96 and 103 to 106 (GSDR). Residue Asp-105 is the Proton acceptor of the active site. ATP is bound at residue Thr-129. Position 189 (Thr-189) interacts with substrate.

This sequence belongs to the type III pantothenate kinase family. In terms of assembly, homodimer. The cofactor is NH4(+). K(+) is required as a cofactor.

The protein resides in the cytoplasm. The enzyme catalyses (R)-pantothenate + ATP = (R)-4'-phosphopantothenate + ADP + H(+). It functions in the pathway cofactor biosynthesis; coenzyme A biosynthesis; CoA from (R)-pantothenate: step 1/5. In terms of biological role, catalyzes the phosphorylation of pantothenate (Pan), the first step in CoA biosynthesis. In Burkholderia lata (strain ATCC 17760 / DSM 23089 / LMG 22485 / NCIMB 9086 / R18194 / 383), this protein is Type III pantothenate kinase.